A 229-amino-acid polypeptide reads, in one-letter code: Vacuolar protein-sorting-associated protein 60 (229 aa).

Residues 9-155 (NKKSHDQLLQ…QGDELQEVLA (147 aa)) are a coiled coil. Serine 12 bears the Phosphoserine mark. The tract at residues 128 to 159 (INIDKLQDMQDEMLDLIEQGDELQEVLAMNNN) is interaction with VTA1. A disordered region spans residues 186 to 229 (PTSENSLGNDMPSYLLGANAPPAFIDEEPNLDTEDKNKALESAQ). Residues 218–229 (TEDKNKALESAQ) are compositionally biased toward basic and acidic residues.

Belongs to the SNF7 family. In terms of assembly, interacts with VTA1; the interaction occurs at he endosomal membrane.

It localises to the endosome membrane. The protein resides in the vacuole membrane. In terms of biological role, has a role in a late stage of multivesicular body (MVB) formation. Can stimulate VPS4 ATPase activity via VTA1. The protein is Vacuolar protein-sorting-associated protein 60 (VPS60) of Saccharomyces cerevisiae (strain ATCC 204508 / S288c) (Baker's yeast).